Here is a 249-residue protein sequence, read N- to C-terminus: Phosphate import ATP-binding protein PstB 3 (249 aa).

The region spanning 4–244 (LVINNLDLYY…PQDERTENYI (241 aa)) is the ABC transporter domain. 36–43 (GPSGCGKS) contacts ATP.

The protein belongs to the ABC transporter superfamily. Phosphate importer (TC 3.A.1.7) family. As to quaternary structure, the complex is composed of two ATP-binding proteins (PstB), two transmembrane proteins (PstC and PstA) and a solute-binding protein (PstS).

It is found in the cell membrane. It catalyses the reaction phosphate(out) + ATP + H2O = ADP + 2 phosphate(in) + H(+). Its function is as follows. Part of the ABC transporter complex PstSACB involved in phosphate import. Responsible for energy coupling to the transport system. In Streptococcus agalactiae serotype Ia (strain ATCC 27591 / A909 / CDC SS700), this protein is Phosphate import ATP-binding protein PstB 3.